The primary structure comprises 229 residues: Triosephosphate isomerase (229 aa).

Residue 9–11 participates in substrate binding; the sequence is NYK. His-93 acts as the Electrophile in catalysis. The active-site Proton acceptor is the Glu-141. Substrate contacts are provided by residues Ile-146, Gly-180, and 201–202; that span reads AS.

Belongs to the triosephosphate isomerase family. In terms of assembly, homotetramer; dimer of dimers.

The protein localises to the cytoplasm. It catalyses the reaction D-glyceraldehyde 3-phosphate = dihydroxyacetone phosphate. Its pathway is carbohydrate biosynthesis; gluconeogenesis. It functions in the pathway carbohydrate degradation; glycolysis; D-glyceraldehyde 3-phosphate from glycerone phosphate: step 1/1. Functionally, involved in the gluconeogenesis. Catalyzes stereospecifically the conversion of dihydroxyacetone phosphate (DHAP) to D-glyceraldehyde-3-phosphate (G3P). The protein is Triosephosphate isomerase of Sulfurisphaera tokodaii (strain DSM 16993 / JCM 10545 / NBRC 100140 / 7) (Sulfolobus tokodaii).